A 116-amino-acid polypeptide reads, in one-letter code: Helper of Tim protein 13 (116 aa).

Residues 10–94 (TVDDQSRCVH…SNLICPNCRS (85 aa)) form a CHY-type; degenerate zinc finger. Zn(2+) contacts are provided by Cys17, His19, Cys40, Cys43, Cys68, Cys71, Cys89, and Cys92.

Interacts with the small Tim proteins TIM8, TIM9, TIM10, TIM12, and TIM13.

The protein resides in the mitochondrion intermembrane space. The protein localises to the mitochondrion membrane. Functionally, required for the assembly or recycling of the small Tim proteins in the mitochondrial intermembrane, thereby participating in the import and insertion of multi-pass transmembrane proteins into the mitochondrial inner membrane. Probably acts by facilitating the formation of disulfide bonds in small Tim proteins. The chain is Helper of Tim protein 13 (HOT13) from Saccharomyces cerevisiae (strain ATCC 204508 / S288c) (Baker's yeast).